Consider the following 370-residue polypeptide: mRNA cap guanine-N(7) methyltransferase 1 (370 aa).

The span at 1–11 shows a compositional bias: low complexity; sequence MKRGFSDSPSS. A disordered region spans residues 1–34; it reads MKRGFSDSPSSSAPPPSSRFKSNPEGDSQFLEDE. The region spanning 61 to 341 is the mRNA cap 0 methyltransferase domain; sequence SPIIHLKKLN…LYLSFVLRKR (281 aa). 70–71 lines the mRNA pocket; sequence NN. S-adenosyl-L-methionine contacts are provided by residues K74, A92, D114, 150–151, and 172–174; these read DC and QFA.

This sequence belongs to the class I-like SAM-binding methyltransferase superfamily. mRNA cap 0 methyltransferase family.

It is found in the nucleus. It carries out the reaction a 5'-end (5'-triphosphoguanosine)-ribonucleoside in mRNA + S-adenosyl-L-methionine = a 5'-end (N(7)-methyl 5'-triphosphoguanosine)-ribonucleoside in mRNA + S-adenosyl-L-homocysteine. Its function is as follows. mRNA-capping methyltransferase that methylates the N7 position of the added guanosine to the 5'-cap structure of mRNAs. Binds RNA containing 5'-terminal GpppC. The protein is mRNA cap guanine-N(7) methyltransferase 1 of Arabidopsis thaliana (Mouse-ear cress).